We begin with the raw amino-acid sequence, 373 residues long: NADPH-dependent 3-keto-steroid reductase Hsd3b5 (373 aa).

NADP(+) is bound by residues 10–15 (GAGGFL), Tyr155, and Lys159. The active-site Proton donor is Lys159. A helical membrane pass occupies residues 288 to 308 (LPLLYWLAFLLETVSFLLRPF). Residue Lys350 is modified to N6-acetyllysine.

The protein belongs to the 3-beta-HSD family. As to expression, expressed predominantly in male liver.

Its subcellular location is the endoplasmic reticulum membrane. It is found in the mitochondrion membrane. The catalysed reaction is a 3beta-hydroxysteroid + NADP(+) = a 3-oxosteroid + NADPH + H(+). It catalyses the reaction 5alpha-androstane-3beta,17beta-diol + NADP(+) = 17beta-hydroxy-5alpha-androstan-3-one + NADPH + H(+). The enzyme catalyses 3beta-hydroxy-5alpha-androstan-17-one + NADP(+) = 5alpha-androstan-3,17-dione + NADPH + H(+). The protein operates within steroid metabolism. Its function is as follows. Responsible for the reduction of the oxo group on the C-3 of 5alpha-androstane steroids. Catalyzes the conversion of dihydrotestosterone to its inactive form 5alpha-androstanediol, that does not bind androgen receptor/AR. Also converts androstanedione, a precursor of testosterone and estrone, to epiandrosterone. Does not function as an isomerase. The chain is NADPH-dependent 3-keto-steroid reductase Hsd3b5 from Rattus norvegicus (Rat).